Here is a 289-residue protein sequence, read N- to C-terminus: NFU1 iron-sulfur cluster scaffold homolog, mitochondrial (289 aa).

A mitochondrion-targeting transit peptide spans 1-56 (MAKLISYAKGGFLRNTRLTSRAVPQVYQHATSSRGFVHLTSSVAQSSAIHVSTPST). The interval 183-251 (IKELLDTRIR…IPEVESVEQV (69 aa)) is nifU. Residues C220 and C223 each contribute to the [4Fe-4S] cluster site. The disordered stretch occupies residues 267 to 289 (ERNLKQKDTSSTAPVGIGGGPAN).

This sequence belongs to the NifU family.

Its subcellular location is the mitochondrion. Molecular scaffold for [Fe-S] cluster assembly of mitochondrial iron-sulfur proteins. In Drosophila willistoni (Fruit fly), this protein is NFU1 iron-sulfur cluster scaffold homolog, mitochondrial.